Here is a 314-residue protein sequence, read N- to C-terminus: DNA-directed RNA polymerase subunit alpha (314 aa).

An alpha N-terminal domain (alpha-NTD) region spans residues 1 to 228; sequence MIEFEKPNIH…EHLAMFVDLT (228 aa). The tract at residues 245 to 314 is alpha C-terminal domain (alpha-CTD); sequence KEKMLEMTIE…DLGVSFRQDD (70 aa).

This sequence belongs to the RNA polymerase alpha chain family. As to quaternary structure, homodimer. The RNAP catalytic core consists of 2 alpha, 1 beta, 1 beta' and 1 omega subunit. When a sigma factor is associated with the core the holoenzyme is formed, which can initiate transcription.

The catalysed reaction is RNA(n) + a ribonucleoside 5'-triphosphate = RNA(n+1) + diphosphate. DNA-dependent RNA polymerase catalyzes the transcription of DNA into RNA using the four ribonucleoside triphosphates as substrates. The chain is DNA-directed RNA polymerase subunit alpha from Limosilactobacillus reuteri (strain DSM 20016) (Lactobacillus reuteri).